We begin with the raw amino-acid sequence, 339 residues long: MTVEMNKSIVKAYSVLETGEPLPFDVAVELAHLAGEDVPDLLSLANKVKNRYATLSEGALHSCSIINAKSGVCAENCRFCAQSLHNSADVEQYSLLDAEAIVRSAGDVYDEGIRHFGVVTSGYGYRKVNPEFLKIVAIIDQLRQEYPDLNVCASLGILGEEPVRMLAEHNVRHYNINIQVAPDRYSDLIADSHPLKDRIDTIRLLRKYGIPVCCGGILGVGETMRERLDFIYALQELDIAVIPLNVLVPIEGTPLQGAATPALTDIVKTFALCRLVHPGKIIKFAAGRETVMNDFQGLLMLAGANGFLTGGYLTTRGRKIGDDREFMRQLAGFAEVSCS.

A Radical SAM core domain is found at 55 to 288 (LSEGALHSCS…GKIIKFAAGR (234 aa)). Residues C73, C77, and C80 each coordinate [4Fe-4S] cluster. C152, C213, and K283 together coordinate [2Fe-2S] cluster.

The protein belongs to the radical SAM superfamily. Biotin synthase family. As to quaternary structure, homodimer. [4Fe-4S] cluster serves as cofactor. The cofactor is [2Fe-2S] cluster.

It carries out the reaction (4R,5S)-dethiobiotin + (sulfur carrier)-SH + 2 reduced [2Fe-2S]-[ferredoxin] + 2 S-adenosyl-L-methionine = (sulfur carrier)-H + biotin + 2 5'-deoxyadenosine + 2 L-methionine + 2 oxidized [2Fe-2S]-[ferredoxin]. It participates in cofactor biosynthesis; biotin biosynthesis; biotin from 7,8-diaminononanoate: step 2/2. Functionally, catalyzes the conversion of dethiobiotin (DTB) to biotin by the insertion of a sulfur atom into dethiobiotin via a radical-based mechanism. The sequence is that of Biotin synthase from Chlorobium phaeobacteroides (strain BS1).